We begin with the raw amino-acid sequence, 638 residues long: 1-deoxy-D-xylulose-5-phosphate synthase (638 aa).

Residues His-79 and 120–122 (AHS) contribute to the thiamine diphosphate site. Asp-151 lines the Mg(2+) pocket. Residues 152–153 (GA), Asn-180, Tyr-289, and Glu-371 contribute to the thiamine diphosphate site. Asn-180 is a Mg(2+) binding site.

This sequence belongs to the transketolase family. DXPS subfamily. In terms of assembly, homodimer. Mg(2+) serves as cofactor. Thiamine diphosphate is required as a cofactor.

It catalyses the reaction D-glyceraldehyde 3-phosphate + pyruvate + H(+) = 1-deoxy-D-xylulose 5-phosphate + CO2. It functions in the pathway metabolic intermediate biosynthesis; 1-deoxy-D-xylulose 5-phosphate biosynthesis; 1-deoxy-D-xylulose 5-phosphate from D-glyceraldehyde 3-phosphate and pyruvate: step 1/1. Its function is as follows. Catalyzes the acyloin condensation reaction between C atoms 2 and 3 of pyruvate and glyceraldehyde 3-phosphate to yield 1-deoxy-D-xylulose-5-phosphate (DXP). In Rhizobium leguminosarum bv. trifolii (strain WSM2304), this protein is 1-deoxy-D-xylulose-5-phosphate synthase.